The following is a 1026-amino-acid chain: MKFFALFIHRPVATLLLTLAIALCGVLGFRLLPVSPLPQVDFPVISVSASLPGASPETMASAVATPLERALGRIAGVSEMTSTSSLGSTRVILVFNLDRDINGAARDVQAAINAAQNLLPSGMSSRPTYRKVNPSDAPVMILTLTSDTYSQGQLYDFASTQLSQKISQMEGVGDVSIGGSSLPAVRVALNPVALFNQGISLDEVRQAIAQANVRQPLGNVENSQKSWQIKTNDELKTADAYAPLIIHYNNGAAVRLSDVATVEDSVQNSRNAGMANAKPAILVMIRRAPDANIITTVDNIRAAMPELRASLPAEIQLDVAQDRSPTIRASLAEVEQSLVIAVALVILVVFLFLRSGRATAIPALAVPVSLIGTFAAMYLCGFSLNNLSLMALTIATGFVVDDAIVVLENISRHIEAGMKPLQASLQGVREVGFTVLSMSLSLVAVFIPLLLMEGLPGRLFREFAVTLSVAIMISLLISLTLTPMLCARLLRAVPKRSQPRKQGFNRVLLAMQQGYGRSLKWVLNHARWVLLLLLGTIALNVWLYISIPKTFFPEQDTGRLMGFIQADQSISFQAMTVKLQNFMTIVSSDPAVDNVNGFTGGSRTNSGSMFISLKPLSERDVSAQQVISRLRIKLAKEPGANLFLMPVQDIRIGGREANAGYQYTLLSDDLSELRTWEPKIRAAFSKLPELADVNSDQQDKGAEMALTYDRDAMAQLGISVSAVNALLNNAFGQRQISTIYQPLNQYKVVMEVDDAYTQDVSSLNKMFVINSEGKPIPLSYFASWKPINAPLSVNHQGLSAASTISFNLPEGTDLSSATAAIERTMTSLGVPSAVRGQFSGTAQAFQQSQSSQLLLILAAIITVYIVLGVLYESYVHPLTILSTLPSAGVGALLALEWFGAPFSLVALIGIMLLIGIVKKNAIMMVDFALVAQRSGKLSAQDAIFQACLLRFRPIMMTTLAALFGALPLVLTSGDGAELRQPLGITIVGGLVMSQILTLYTTPVVYLFFDKLRNIRRKAPERDVSLS.

12 helical membrane passes run 12–32, 333–353, 360–380, 387–407, 431–451, 463–483, 528–548, 853–873, 875–895, 897–917, 953–973, and 984–1004; these read VATLLLTLAIALCGVLGFRLL, EVEQSLVIAVALVILVVFLFL, AIPALAVPVSLIGTFAAMYLC, LSLMALTIATGFVVDDAIVVL, VGFTVLSMSLSLVAVFIPLLL, FAVTLSVAIMISLLISLTLTP, WVLLLLLGTIALNVWLYISIP, LLLILAAIITVYIVLGVLYES, VHPLTILSTLPSAGVGALLAL, WFGAPFSLVALIGIMLLIGIV, PIMMTTLAALFGALPLVLTSG, and ITIVGGLVMSQILTLYTTPVV.

The protein belongs to the resistance-nodulation-cell division (RND) (TC 2.A.6) family. MdtC subfamily. Part of a tripartite efflux system composed of MdtA, MdtB and MdtC. MdtC forms a heteromultimer with MdtB.

The protein localises to the cell inner membrane. The chain is Multidrug resistance protein MdtC from Pectobacterium carotovorum subsp. carotovorum (strain PC1).